The following is a 487-amino-acid chain: Probable Xaa-Pro aminopeptidase AFUB_014460 (487 aa).

Mn(2+) is bound by residues aspartate 267, aspartate 278, glutamate 416, and glutamate 455.

The protein belongs to the peptidase M24B family. Mn(2+) serves as cofactor.

The catalysed reaction is Release of any N-terminal amino acid, including proline, that is linked to proline, even from a dipeptide or tripeptide.. Its function is as follows. Catalyzes the removal of a penultimate prolyl residue from the N-termini of peptides. The sequence is that of Probable Xaa-Pro aminopeptidase AFUB_014460 from Aspergillus fumigatus (strain CBS 144.89 / FGSC A1163 / CEA10) (Neosartorya fumigata).